The following is a 177-amino-acid chain: Interleukin-1 receptor antagonist protein (177 aa).

The signal sequence occupies residues 1–25 (MEVCRCHHGYLISLLLFLFHSETAC). Cys-91 and Cys-141 are oxidised to a cystine. 2 N-linked (GlcNAc...) asparagine glycosylation sites follow: Asn-109 and Asn-114.

It belongs to the IL-1 family.

It is found in the secreted. Functionally, anti-inflammatory antagonist of interleukin-1 family of proinflammatory cytokines such as interleukin-1beta/IL1B and interleukin-1alpha/IL1A. Protects from immune dysregulation and uncontrolled systemic inflammation triggered by IL1 for a range of innate stimulatory agents such as pathogens. In Tursiops truncatus (Atlantic bottle-nosed dolphin), this protein is Interleukin-1 receptor antagonist protein (IL1RN).